We begin with the raw amino-acid sequence, 287 residues long: uncharacterized protein (287 aa).

This sequence belongs to the A.longa ORF167/ORF288 family.

It is found in the plastid. This is an uncharacterized protein from Euglena longa (Euglenophycean alga).